An 848-amino-acid chain; its full sequence is Neuroligin-3 (848 aa).

Positions 1–37 (MWLQLGLPSLSLSPTPTVGRSLCLILWFLSLVLRAST) are cleaved as a signal peptide. At 38–709 (QAPAPTVNTH…NPRDYSTELS (672 aa)) the chain is on the extracellular side. N-linked (GlcNAc...) asparagine glycosylation is present at Asn-98. Cys-106 and Cys-141 are joined by a disulfide. Residues 169 to 195 (CRKGGSGAKKQGEDLADNDGDEDEDIR) are disordered. Residues 182-194 (DLADNDGDEDEDI) show a composition bias toward acidic residues. Cystine bridges form between Cys-340/Cys-351 and Cys-510/Cys-544. Residue Asn-545 is glycosylated (N-linked (GlcNAc...) asparagine). Composition is skewed to polar residues over residues 645–656 (TKVPPPDTTHSS) and 677–689 (AYSNENAPGSWNG). The interval 645–691 (TKVPPPDTTHSSHITRRPNGKTWSTKRPAISPAYSNENAPGSWNGDQ) is disordered. Residues 710 to 730 (VTIAVGASLLFLNVLAFAALY) traverse the membrane as a helical segment. Residues 731–848 (YRKDKRRQEP…LPNSHSTTRV (118 aa)) lie on the Cytoplasmic side of the membrane. Residue Ser-745 is modified to Phosphoserine. Tyr-792 is subject to Phosphotyrosine.

This sequence belongs to the type-B carboxylesterase/lipase family. In terms of assembly, homodimer, and heterodimer with NLGN1 and NLGN2. Interacts with neurexins NRXN1, NRXN2 and NRXN3. Interaction with neurexins is mediated by heparan sulfate glycan modification on neurexin. Interacts (via its C-terminus) with DLG4/PSD-95 (via PDZ domain 3). The N-terminus is blocked. As to expression, detected in brain and on hippocampus neurons, especially at excitatory synapses. Detected in retina (at protein level). Expressed in brain, spinal cord and dorsal root ganglion.

Its subcellular location is the cell membrane. It is found in the synapse. In terms of biological role, cell surface protein involved in cell-cell-interactions via its interactions with neurexin family members. Plays a role in synapse function and synaptic signal transmission, and probably mediates its effects by recruiting and clustering other synaptic proteins. May promote the initial formation of synapses, but is not essential for this. May also play a role in glia-glia or glia-neuron interactions in the developing peripheral nervous system. This Rattus norvegicus (Rat) protein is Neuroligin-3 (Nlgn3).